Consider the following 469-residue polypeptide: L-seryl-tRNA(Sec) selenium transferase (469 aa).

N6-(pyridoxal phosphate)lysine is present on Lys295.

This sequence belongs to the SelA family. Requires pyridoxal 5'-phosphate as cofactor.

It localises to the cytoplasm. The enzyme catalyses L-seryl-tRNA(Sec) + selenophosphate + H(+) = L-selenocysteinyl-tRNA(Sec) + phosphate. It functions in the pathway aminoacyl-tRNA biosynthesis; selenocysteinyl-tRNA(Sec) biosynthesis; selenocysteinyl-tRNA(Sec) from L-seryl-tRNA(Sec) (bacterial route): step 1/1. Converts seryl-tRNA(Sec) to selenocysteinyl-tRNA(Sec) required for selenoprotein biosynthesis. This chain is L-seryl-tRNA(Sec) selenium transferase, found in Methylocella silvestris (strain DSM 15510 / CIP 108128 / LMG 27833 / NCIMB 13906 / BL2).